A 1249-amino-acid polypeptide reads, in one-letter code: Protein transport protein Sec31A (1249 aa).

WD repeat units lie at residues 4 to 47 (KEID…EIFE), 64 to 111 (SSSH…AGDK), 120 to 160 (KHTG…TPMT), 166 to 206 (QPPE…PIIK), 209 to 254 (DHSN…SPLR), 258 to 298 (NHAR…VLYE), and 301 to 342 (TNTQ…DGLR). Residues 161-470 (PGAKTQPPED…IDASQTDFEK (310 aa)) form an interaction with SEC13 region. A WD 8; interaction with SEC13 repeat occupies 397 to 429 (SFSFGGKLVTFENVTGQPQQGAEQPRRQPVFIS). An Asymmetric dimethylarginine modification is found at Arg-423. Residues Ser-526 and Ser-531 each carry the phosphoserine modification. Lys-647 participates in a covalent cross-link: Glycyl lysine isopeptide (Lys-Gly) (interchain with G-Cter in ubiquitin). Disordered stretches follow at residues 790-829 (QGRS…VQSQ), 842-940 (TTWS…RYPN), and 954-1123 (PHMY…PIGN). Positions 796-805 (GQESSRSSYE) are enriched in polar residues. Ser-799 is modified (phosphoserine). Positions 800–1142 (SRSSYEGQPL…TEKITKKPIP (343 aa)) are interaction with PDCD6. An ALG-2-binding site motif-2 (ABS-2) motif is present at residues 873 to 879 (GFIMHGN). Residues 898-908 (QPPPYPQPQPY) are compositionally biased toward pro residues. Composition is skewed to low complexity over residues 961–970 (PASSPTSSSA) and 991–1007 (PSSS…GTPP). Residues 1013-1024 (PASQRTGPQNGW) are compositionally biased toward polar residues. A compositionally biased stretch (low complexity) spans 1056-1074 (PGGDPQPQGLQQQPSASGP). Thr-1190 carries the post-translational modification Phosphothreonine. Ser-1192 is subject to Phosphoserine. Residue Lys-1246 forms a Glycyl lysine isopeptide (Lys-Gly) (interchain with G-Cter in ubiquitin) linkage.

This sequence belongs to the WD repeat SEC31 family. COPII is composed of at least 5 proteins: the SEC23/24 complex, the SEC13/31 complex and SAR1. SEC13 and SEC31 make a 2:2 tetramer that forms the edge element of the COPII outer coat. The tetramer self-assembles in multiple copies to form the complete polyhedral cage. Interacts (via WD 8) with SEC13. Interacts with PDCD6; interaction takes place in response to cytosolic calcium increase and leads to bridge together the BCR(KLHL12) complex and SEC31A, leading to monoubiquitination. Interacts with KLHL12. Post-translationally, monoubiquitinated by the BCR(KLHL12) E3 ubiquitin ligase complex, leading to regulate the size of COPII coats. In terms of tissue distribution, ubiquitously expressed.

Its subcellular location is the cytoplasm. It localises to the cytoplasmic vesicle. The protein resides in the COPII-coated vesicle membrane. The protein localises to the endoplasmic reticulum membrane. In terms of biological role, component of the coat protein complex II (COPII) which promotes the formation of transport vesicles from the endoplasmic reticulum (ER). The coat has two main functions, the physical deformation of the endoplasmic reticulum membrane into vesicles and the selection of cargo molecules. This chain is Protein transport protein Sec31A (Sec31a), found in Rattus norvegicus (Rat).